A 257-amino-acid chain; its full sequence is Ribosome-recycling factor, mitochondrial (257 aa).

Belongs to the RRF family.

It is found in the mitochondrion. In terms of biological role, necessary for protein synthesis in mitochondria. Functions as a ribosome recycling factor in mitochondria. This chain is Ribosome-recycling factor, mitochondrial (RRF1), found in Debaryomyces hansenii (strain ATCC 36239 / CBS 767 / BCRC 21394 / JCM 1990 / NBRC 0083 / IGC 2968) (Yeast).